We begin with the raw amino-acid sequence, 670 residues long: Probable beta-glucosidase N (670 aa).

An N-terminal signal peptide occupies residues methionine 1–glycine 21. Asparagine 51 is a glycosylation site (N-linked (GlcNAc...) asparagine). A disordered region spans residues phenylalanine 65–arginine 87. Asparagine 141 is a glycosylation site (N-linked (GlcNAc...) asparagine). Aspartate 152 is a catalytic residue. Asparagine 184, asparagine 248, asparagine 330, and asparagine 417 each carry an N-linked (GlcNAc...) asparagine glycan.

This sequence belongs to the glycosyl hydrolase 3 family.

The protein localises to the secreted. It carries out the reaction Hydrolysis of terminal, non-reducing beta-D-glucosyl residues with release of beta-D-glucose.. The protein operates within glycan metabolism; cellulose degradation. Beta-glucosidases are one of a number of cellulolytic enzymes involved in the degradation of cellulosic biomass. Catalyzes the last step releasing glucose from the inhibitory cellobiose. In Emericella nidulans (strain FGSC A4 / ATCC 38163 / CBS 112.46 / NRRL 194 / M139) (Aspergillus nidulans), this protein is Probable beta-glucosidase N (bglN).